The primary structure comprises 292 residues: 4-hydroxy-tetrahydrodipicolinate synthase (292 aa).

Thr-44 provides a ligand contact to pyruvate. Tyr-132 (proton donor/acceptor) is an active-site residue. Catalysis depends on Lys-161, which acts as the Schiff-base intermediate with substrate. Ile-203 is a binding site for pyruvate.

The protein belongs to the DapA family. Homotetramer.

It localises to the cytoplasm. The enzyme catalyses L-aspartate 4-semialdehyde + pyruvate = (2S,4S)-4-hydroxy-2,3,4,5-tetrahydrodipicolinate + H2O + H(+). Its pathway is amino-acid biosynthesis; L-lysine biosynthesis via DAP pathway; (S)-tetrahydrodipicolinate from L-aspartate: step 3/4. With respect to regulation, is feedback inhibited by lysine. Is competitively inhibited by 2-oxobutyrate with respect to pyruvate. Its function is as follows. Catalyzes the condensation of (S)-aspartate-beta-semialdehyde [(S)-ASA] and pyruvate to 4-hydroxy-tetrahydrodipicolinate (HTPA). The sequence is that of 4-hydroxy-tetrahydrodipicolinate synthase from Rhizobium meliloti (Ensifer meliloti).